A 450-amino-acid chain; its full sequence is Tubulin alpha chain (450 aa).

GTP is bound at residue Gln11. Residue Lys40 is modified to N6-acetyllysine. Positions 71, 140, 144, 145, 179, 206, and 228 each coordinate GTP. Residue Glu71 coordinates Mg(2+). Residue Glu254 is part of the active site. Positions 431–450 (DYEEVGTDSVGEEDEEGEEY) are disordered.

Belongs to the tubulin family. Dimer of alpha and beta chains. A typical microtubule is a hollow water-filled tube with an outer diameter of 25 nm and an inner diameter of 15 nM. Alpha-beta heterodimers associate head-to-tail to form protofilaments running lengthwise along the microtubule wall with the beta-tubulin subunit facing the microtubule plus end conferring a structural polarity. Microtubules usually have 13 protofilaments but different protofilament numbers can be found in some organisms and specialized cells. It depends on Mg(2+) as a cofactor. Post-translationally, some glutamate residues at the C-terminus are polyglycylated, resulting in polyglycine chains on the gamma-carboxyl group. Glycylation is mainly limited to tubulin incorporated into axonemes (cilia and flagella) whereas glutamylation is prevalent in neuronal cells, centrioles, axonemes, and the mitotic spindle. Both modifications can coexist on the same protein on adjacent residues, and lowering polyglycylation levels increases polyglutamylation, and reciprocally. The precise function of polyglycylation is still unclear. In terms of processing, some glutamate residues at the C-terminus are polyglutamylated, resulting in polyglutamate chains on the gamma-carboxyl group. Polyglutamylation plays a key role in microtubule severing by spastin (SPAST). SPAST preferentially recognizes and acts on microtubules decorated with short polyglutamate tails: severing activity by SPAST increases as the number of glutamates per tubulin rises from one to eight, but decreases beyond this glutamylation threshold. Acetylation of alpha chains at Lys-40 is located inside the microtubule lumen. This modification has been correlated with increased microtubule stability, intracellular transport and ciliary assembly. Post-translationally, undergoes a tyrosination/detyrosination cycle, the cyclic removal and re-addition of a C-terminal tyrosine residue by the enzymes tubulin tyrosine carboxypeptidase (MATCAP, VASH1 or VASH2) and tubulin tyrosine ligase (TTL), respectively. In terms of processing, tyrosination promotes microtubule interaction with CAP-Gly microtubule plus-end tracking proteins. Tyrosinated tubulins regulate the initiation of dynein-driven motility. Detyrosination is involved in metaphase plate congression by guiding chromosomes during mitosis. Detyrosination increases microtubules-dependent mechanotransduction in dystrophic cardiac and skeletal muscle. In cardiomyocytes, detyrosinated microtubules are required to resist to contractile compression during contraction.

It localises to the cytoplasm. Its subcellular location is the cytoskeleton. The catalysed reaction is GTP + H2O = GDP + phosphate + H(+). In terms of biological role, tubulin is the major constituent of microtubules, a cylinder consisting of laterally associated linear protofilaments composed of alpha- and beta-tubulin heterodimers. Microtubules grow by the addition of GTP-tubulin dimers to the microtubule end, where a stabilizing cap forms. Below the cap, tubulin dimers are in GDP-bound state, owing to GTPase activity of alpha-tubulin. The chain is Tubulin alpha chain from Oncorhynchus keta (Chum salmon).